Reading from the N-terminus, the 428-residue chain is Adenylosuccinate synthetase (428 aa).

Residues 12–18 (GDEGKGK) and 40–42 (GHT) each bind GTP. The active-site Proton acceptor is the Asp13. Mg(2+) contacts are provided by Asp13 and Gly40. Residues 13–16 (DEGK), 38–41 (NAGH), Thr128, Arg142, Gln223, Thr238, and Arg302 contribute to the IMP site. Catalysis depends on His41, which acts as the Proton donor. 298–304 (TTTGRPR) is a binding site for substrate. Residues Arg304, 330-332 (KLD), and 412-414 (GVG) each bind GTP.

This sequence belongs to the adenylosuccinate synthetase family. Homodimer. Requires Mg(2+) as cofactor.

It is found in the cytoplasm. The enzyme catalyses IMP + L-aspartate + GTP = N(6)-(1,2-dicarboxyethyl)-AMP + GDP + phosphate + 2 H(+). It functions in the pathway purine metabolism; AMP biosynthesis via de novo pathway; AMP from IMP: step 1/2. Plays an important role in the de novo pathway of purine nucleotide biosynthesis. Catalyzes the first committed step in the biosynthesis of AMP from IMP. The polypeptide is Adenylosuccinate synthetase (Kineococcus radiotolerans (strain ATCC BAA-149 / DSM 14245 / SRS30216)).